We begin with the raw amino-acid sequence, 257 residues long: Imidazole glycerol phosphate synthase subunit HisF (257 aa).

Residues aspartate 11 and aspartate 130 contribute to the active site.

The protein belongs to the HisA/HisF family. In terms of assembly, heterodimer of HisH and HisF.

The protein resides in the cytoplasm. The catalysed reaction is 5-[(5-phospho-1-deoxy-D-ribulos-1-ylimino)methylamino]-1-(5-phospho-beta-D-ribosyl)imidazole-4-carboxamide + L-glutamine = D-erythro-1-(imidazol-4-yl)glycerol 3-phosphate + 5-amino-1-(5-phospho-beta-D-ribosyl)imidazole-4-carboxamide + L-glutamate + H(+). It functions in the pathway amino-acid biosynthesis; L-histidine biosynthesis; L-histidine from 5-phospho-alpha-D-ribose 1-diphosphate: step 5/9. Functionally, IGPS catalyzes the conversion of PRFAR and glutamine to IGP, AICAR and glutamate. The HisF subunit catalyzes the cyclization activity that produces IGP and AICAR from PRFAR using the ammonia provided by the HisH subunit. The polypeptide is Imidazole glycerol phosphate synthase subunit HisF (Trichormus variabilis (strain ATCC 29413 / PCC 7937) (Anabaena variabilis)).